A 134-amino-acid chain; its full sequence is Large ribosomal subunit protein bL20 (134 aa).

This sequence belongs to the bacterial ribosomal protein bL20 family.

In terms of biological role, binds directly to 23S ribosomal RNA and is necessary for the in vitro assembly process of the 50S ribosomal subunit. It is not involved in the protein synthesizing functions of that subunit. The polypeptide is Large ribosomal subunit protein bL20 (Rhizobium leguminosarum bv. trifolii (strain WSM2304)).